We begin with the raw amino-acid sequence, 1571 residues long: Pentafunctional AROM polypeptide 2 (1571 aa).

The segment at 1 to 380 (MAEPTKISIL…YEPKASVVSN (380 aa)) is 3-dehydroquinate synthase. NAD(+) is bound by residues 44 to 46 (DTN), 81 to 84 (ENSK), 112 to 114 (GGV), and Asp-117. Arg-128 lines the 7-phospho-2-dehydro-3-deoxy-D-arabino-heptonate pocket. 137–138 (TT) contributes to the NAD(+) binding site. The 7-phospho-2-dehydro-3-deoxy-D-arabino-heptonate site is built by Asp-144 and Lys-150. Lys-159 contacts NAD(+). Asn-160 provides a ligand contact to 7-phospho-2-dehydro-3-deoxy-D-arabino-heptonate. NAD(+) is bound by residues 177 to 180 (FIDT) and Asn-188. Glu-192 provides a ligand contact to Zn(2+). 7-phospho-2-dehydro-3-deoxy-D-arabino-heptonate contacts are provided by residues 192–195 (EVIK) and Lys-246. The Proton acceptor; for 3-dehydroquinate synthase activity role is filled by Glu-256. Residues 260–264 (RNLLN) and His-267 each bind 7-phospho-2-dehydro-3-deoxy-D-arabino-heptonate. His-267 is a Zn(2+) binding site. Catalysis depends on His-271, which acts as the Proton acceptor; for 3-dehydroquinate synthase activity. His-283 and Lys-352 together coordinate 7-phospho-2-dehydro-3-deoxy-D-arabino-heptonate. Zn(2+) is bound at residue His-283. Residues 393 to 838 (VIPGVPKNLN…WDALKQKFGV (446 aa)) form an EPSP synthase region. The active-site For EPSP synthase activity is the Cys-820. The tract at residues 859–1051 (NASIIIIGMR…RKKHLSFFVS (193 aa)) is shikimate kinase. 866–873 (GMRGAGKT) provides a ligand contact to ATP. Residues 1052–1273 (LTLPDLRESG…AAPGQLSAAE (222 aa)) form a 3-dehydroquinase region. His-1175 acts as the Proton acceptor; for 3-dehydroquinate dehydratase activity in catalysis. Lys-1203 functions as the Schiff-base intermediate with substrate; for 3-dehydroquinate dehydratase activity in the catalytic mechanism. The interval 1286–1571 (AKKFAVLGKP…NAVLGTNETK (286 aa)) is shikimate dehydrogenase.

The protein in the N-terminal section; belongs to the sugar phosphate cyclases superfamily. Dehydroquinate synthase family. It in the 2nd section; belongs to the EPSP synthase family. In the 3rd section; belongs to the shikimate kinase family. This sequence in the 4th section; belongs to the type-I 3-dehydroquinase family. The protein in the C-terminal section; belongs to the shikimate dehydrogenase family. Homodimer. The cofactor is Zn(2+).

Its subcellular location is the cytoplasm. It catalyses the reaction 7-phospho-2-dehydro-3-deoxy-D-arabino-heptonate = 3-dehydroquinate + phosphate. The catalysed reaction is 3-dehydroquinate = 3-dehydroshikimate + H2O. The enzyme catalyses shikimate + NADP(+) = 3-dehydroshikimate + NADPH + H(+). It carries out the reaction shikimate + ATP = 3-phosphoshikimate + ADP + H(+). It catalyses the reaction 3-phosphoshikimate + phosphoenolpyruvate = 5-O-(1-carboxyvinyl)-3-phosphoshikimate + phosphate. It participates in metabolic intermediate biosynthesis; chorismate biosynthesis; chorismate from D-erythrose 4-phosphate and phosphoenolpyruvate: step 2/7. Its pathway is metabolic intermediate biosynthesis; chorismate biosynthesis; chorismate from D-erythrose 4-phosphate and phosphoenolpyruvate: step 3/7. The protein operates within metabolic intermediate biosynthesis; chorismate biosynthesis; chorismate from D-erythrose 4-phosphate and phosphoenolpyruvate: step 4/7. It functions in the pathway metabolic intermediate biosynthesis; chorismate biosynthesis; chorismate from D-erythrose 4-phosphate and phosphoenolpyruvate: step 5/7. It participates in metabolic intermediate biosynthesis; chorismate biosynthesis; chorismate from D-erythrose 4-phosphate and phosphoenolpyruvate: step 6/7. In terms of biological role, the AROM polypeptide catalyzes 5 consecutive enzymatic reactions in prechorismate polyaromatic amino acid biosynthesis. This Talaromyces marneffei (strain ATCC 18224 / CBS 334.59 / QM 7333) (Penicillium marneffei) protein is Pentafunctional AROM polypeptide 2.